Reading from the N-terminus, the 338-residue chain is tRNA N6-adenosine threonylcarbamoyltransferase (338 aa).

The Fe cation site is built by His-111 and His-115. Substrate-binding positions include 134-138 (LVSGG), Asp-167, Gly-180, and Asn-272. Fe cation is bound at residue Asp-300.

Belongs to the KAE1 / TsaD family. It depends on Fe(2+) as a cofactor.

Its subcellular location is the cytoplasm. The catalysed reaction is L-threonylcarbamoyladenylate + adenosine(37) in tRNA = N(6)-L-threonylcarbamoyladenosine(37) in tRNA + AMP + H(+). Functionally, required for the formation of a threonylcarbamoyl group on adenosine at position 37 (t(6)A37) in tRNAs that read codons beginning with adenine. Is involved in the transfer of the threonylcarbamoyl moiety of threonylcarbamoyl-AMP (TC-AMP) to the N6 group of A37, together with TsaE and TsaB. TsaD likely plays a direct catalytic role in this reaction. The chain is tRNA N6-adenosine threonylcarbamoyltransferase from Shewanella baltica (strain OS155 / ATCC BAA-1091).